The primary structure comprises 321 residues: Acetyl-coenzyme A carboxylase carboxyl transferase subunit alpha (321 aa).

In terms of domain architecture, CoA carboxyltransferase C-terminal spans 32 to 293; that stretch reads DISEEIARLQ…KRVLQDQLKE (262 aa).

The protein belongs to the AccA family. As to quaternary structure, acetyl-CoA carboxylase is a heterohexamer composed of biotin carboxyl carrier protein (AccB), biotin carboxylase (AccC) and two subunits each of ACCase subunit alpha (AccA) and ACCase subunit beta (AccD).

The protein resides in the cytoplasm. The catalysed reaction is N(6)-carboxybiotinyl-L-lysyl-[protein] + acetyl-CoA = N(6)-biotinyl-L-lysyl-[protein] + malonyl-CoA. The protein operates within lipid metabolism; malonyl-CoA biosynthesis; malonyl-CoA from acetyl-CoA: step 1/1. In terms of biological role, component of the acetyl coenzyme A carboxylase (ACC) complex. First, biotin carboxylase catalyzes the carboxylation of biotin on its carrier protein (BCCP) and then the CO(2) group is transferred by the carboxyltransferase to acetyl-CoA to form malonyl-CoA. This is Acetyl-coenzyme A carboxylase carboxyl transferase subunit alpha from Chromobacterium violaceum (strain ATCC 12472 / DSM 30191 / JCM 1249 / CCUG 213 / NBRC 12614 / NCIMB 9131 / NCTC 9757 / MK).